The following is a 480-amino-acid chain: uncharacterized protein (480 aa).

Residues 7 to 28 (HVISIFETFGAYFINIFYNFLY) form a helical membrane-spanning segment. Asn73 and Asn195 each carry an N-linked (GlcNAc...) asparagine; by host glycan. A coiled-coil region spans residues 195 to 235 (NRSLLYQIEELTSEKKSLLAELSTLRKKYEKRQSEYRRLVQ). The disordered stretch occupies residues 297–332 (ELTSKSPSNYPVPQSRTIVSKPSDNYPVPQSRSSKI). A compositionally biased stretch (polar residues) spans 301–329 (KSPSNYPVPQSRTIVSKPSDNYPVPQSRS). An N-linked (GlcNAc...) asparagine; by host glycan is attached at Asn455.

The protein belongs to the asfivirus B475L family.

The protein localises to the host membrane. This is an uncharacterized protein from African swine fever virus (isolate Pig/Kenya/KEN-50/1950) (ASFV).